The chain runs to 772 residues: Probable serine/threonine-protein kinase HAL5-like (772 aa).

Disordered regions lie at residues 1-102 (MASS…TRHV), 115-165 (RAGT…EPNN), 185-241 (IDTQ…RSNT), and 344-396 (NADE…SANV). Positions 9-19 (SEPRISRESSL) are enriched in basic and acidic residues. Composition is skewed to low complexity over residues 20–33 (KRSLSISKSLKGLF) and 41–59 (NTGPTTAAAAAAPSSISTP). Over residues 66–86 (TKDKQDRLKNLAANKEKELQT) the composition is skewed to basic and acidic residues. The span at 146-158 (RQSSSNRSSSFSN) shows a compositional bias: low complexity. The span at 202–212 (RRSRSTQRKRL) shows a compositional bias: basic residues. A Protein kinase domain is found at 454 to 758 (GKSIGIIGQG…VDSLLKSSWM (305 aa)). ATP contacts are provided by residues 460-468 (IGQGAYGVV) and Lys-498. Asp-609 serves as the catalytic Proton acceptor.

Belongs to the protein kinase superfamily. CAMK Ser/Thr protein kinase family. NPR/HAL subfamily. HAL5 sub-subfamily.

It carries out the reaction L-seryl-[protein] + ATP = O-phospho-L-seryl-[protein] + ADP + H(+). The enzyme catalyses L-threonyl-[protein] + ATP = O-phospho-L-threonyl-[protein] + ADP + H(+). This chain is Probable serine/threonine-protein kinase HAL5-like, found in Kluyveromyces lactis (strain ATCC 8585 / CBS 2359 / DSM 70799 / NBRC 1267 / NRRL Y-1140 / WM37) (Yeast).